The following is a 227-amino-acid chain: 2-C-methyl-D-erythritol 4-phosphate cytidylyltransferase (227 aa).

This sequence belongs to the IspD/TarI cytidylyltransferase family. IspD subfamily.

It catalyses the reaction 2-C-methyl-D-erythritol 4-phosphate + CTP + H(+) = 4-CDP-2-C-methyl-D-erythritol + diphosphate. It participates in isoprenoid biosynthesis; isopentenyl diphosphate biosynthesis via DXP pathway; isopentenyl diphosphate from 1-deoxy-D-xylulose 5-phosphate: step 2/6. Its function is as follows. Catalyzes the formation of 4-diphosphocytidyl-2-C-methyl-D-erythritol from CTP and 2-C-methyl-D-erythritol 4-phosphate (MEP). The sequence is that of 2-C-methyl-D-erythritol 4-phosphate cytidylyltransferase from Petrotoga mobilis (strain DSM 10674 / SJ95).